A 907-amino-acid chain; its full sequence is Lateral signaling target protein 2 homolog (907 aa).

5 disordered regions span residues Ser339–Asn395, Leu463–Ala604, Asn662–Ala688, Glu716–Gly756, and Gly770–Arg834. The segment covering Asp351–Arg361 has biased composition (polar residues). A compositionally biased stretch (acidic residues) spans Glu367–Pro393. Polar residues-rich tracts occupy residues Leu463–Leu475 and Pro486–Gln495. Over residues Ser501–Glu516 the composition is skewed to acidic residues. Over residues His525–Ser549 the composition is skewed to basic residues. The segment covering Ser550–Ala565 has biased composition (low complexity). Over residues Gln568–Gly580 the composition is skewed to polar residues. Positions Gly592–Gly602 are enriched in gly residues. The span at Ala742–Ala751 shows a compositional bias: polar residues. Residues Gly777–Ser793 are compositionally biased toward low complexity. Residues Pro816–Gln826 are compositionally biased toward polar residues. An FYVE-type zinc finger spans residues Asp845–Val905. Residues Cys851, Cys854, Cys867, Cys870, Cys875, Cys878, Cys897, and Cys900 each contribute to the Zn(2+) site.

It belongs to the lst-2 family.

Negative regulator of epidermal growth factor receptor (EGFR) signaling. The polypeptide is Lateral signaling target protein 2 homolog (Culex quinquefasciatus (Southern house mosquito)).